The sequence spans 163 residues: Nucleotide-binding protein MAV_4575 (163 aa).

This sequence belongs to the YajQ family.

In terms of biological role, nucleotide-binding protein. The sequence is that of Nucleotide-binding protein MAV_4575 from Mycobacterium avium (strain 104).